The following is a 427-amino-acid chain: 4-hydroxy-3-methylbut-2-en-1-yl diphosphate synthase (flavodoxin) (427 aa).

Residues 1–21 form a disordered region; sequence MNKLENTIDSDIAGPAPRHRT. [4Fe-4S] cluster is bound by residues C310, C313, C356, and E363.

The protein belongs to the IspG family. [4Fe-4S] cluster serves as cofactor.

It catalyses the reaction (2E)-4-hydroxy-3-methylbut-2-enyl diphosphate + oxidized [flavodoxin] + H2O + 2 H(+) = 2-C-methyl-D-erythritol 2,4-cyclic diphosphate + reduced [flavodoxin]. It functions in the pathway isoprenoid biosynthesis; isopentenyl diphosphate biosynthesis via DXP pathway; isopentenyl diphosphate from 1-deoxy-D-xylulose 5-phosphate: step 5/6. Functionally, converts 2C-methyl-D-erythritol 2,4-cyclodiphosphate (ME-2,4cPP) into 1-hydroxy-2-methyl-2-(E)-butenyl 4-diphosphate. The sequence is that of 4-hydroxy-3-methylbut-2-en-1-yl diphosphate synthase (flavodoxin) from Bradyrhizobium diazoefficiens (strain JCM 10833 / BCRC 13528 / IAM 13628 / NBRC 14792 / USDA 110).